The sequence spans 601 residues: DNA ligase (601 aa).

Asp258 is a binding site for ATP. The N6-AMP-lysine intermediate role is filled by Lys260. ATP-binding residues include Arg265, Arg280, Glu310, Phe350, Arg427, and Lys433.

Belongs to the ATP-dependent DNA ligase family. In terms of assembly, interacts with the PCNA heterotrimer, probably via subunit PCNA3. A divalent metal cation is required as a cofactor.

The enzyme catalyses ATP + (deoxyribonucleotide)n-3'-hydroxyl + 5'-phospho-(deoxyribonucleotide)m = (deoxyribonucleotide)n+m + AMP + diphosphate.. With respect to regulation, ligase activity stimulated by PCNA heterotrimer. In terms of biological role, DNA ligase that seals nicks in double-stranded DNA during DNA replication, DNA recombination and DNA repair. Interaction with PCNA enhances ligase activity. DNA polymerase I, DNA ligase and the flap endonuclease may be constitutively associated with the PCNA heterotrimer forming a scanning complex able to couple DNA synthesis and Okazaki fragment maturation. This is DNA ligase from Saccharolobus solfataricus (strain ATCC 35092 / DSM 1617 / JCM 11322 / P2) (Sulfolobus solfataricus).